We begin with the raw amino-acid sequence, 334 residues long: GTPase Obg (334 aa).

In terms of domain architecture, Obg spans 1–159; that stretch reads MKFIDQAIIH…RDIQLELMLL (159 aa). The segment at 67–86 is disordered; that stretch reads AQNGQNGSSRKSSGKKGDDI. Over residues 68–77 the composition is skewed to low complexity; sequence QNGQNGSSRK. The 174-residue stretch at 160–333 folds into the OBG-type G domain; sequence ADVGTLGMPN…LCSDITKYLK (174 aa). Residues 166 to 173, 191 to 195, 213 to 216, 283 to 286, and 314 to 316 each bind GTP; these read GMPNVGKS, FTTLH, DIPG, NKID, and SSM. Mg(2+) is bound by residues serine 173 and threonine 193.

This sequence belongs to the TRAFAC class OBG-HflX-like GTPase superfamily. OBG GTPase family. Monomer. Requires Mg(2+) as cofactor.

The protein resides in the cytoplasm. Functionally, an essential GTPase which binds GTP, GDP and possibly (p)ppGpp with moderate affinity, with high nucleotide exchange rates and a fairly low GTP hydrolysis rate. Plays a role in control of the cell cycle, stress response, ribosome biogenesis and in those bacteria that undergo differentiation, in morphogenesis control. The chain is GTPase Obg from Buchnera aphidicola subsp. Acyrthosiphon pisum (strain 5A).